Consider the following 188-residue polypeptide: Proline-rich protein 3 (188 aa).

Residues 1–157 form a disordered region; sequence MPKRKKQNQH…DPQVMEDKSD (157 aa). 2 stretches are compositionally biased toward pro residues: residues 35 to 46 and 69 to 82; these read IGPPSLLGPPPM and LIPPLLSLPPPPWG. Positions 83–96 are enriched in low complexity; the sequence is RGPIRRGLGPRSSP. Positions 145–157 are enriched in basic and acidic residues; the sequence is PKDDPQVMEDKSD. The C3H1-type zinc finger occupies 155 to 183; sequence KSDRPVCRHFAKKGHCRYEDLCAFYHPGV.

In Pan troglodytes (Chimpanzee), this protein is Proline-rich protein 3 (PRR3).